Reading from the N-terminus, the 133-residue chain is L-ectoine synthase (133 aa).

This sequence belongs to the ectoine synthase family.

The catalysed reaction is (2S)-4-acetamido-2-aminobutanoate = L-ectoine + H2O. Its pathway is amine and polyamine biosynthesis; ectoine biosynthesis; L-ectoine from L-aspartate 4-semialdehyde: step 3/3. Functionally, catalyzes the circularization of gamma-N-acetyl-alpha,gamma-diaminobutyric acid (ADABA) to ectoine (1,4,5,6-tetrahydro-2-methyl-4-pyrimidine carboxylic acid), which is an excellent osmoprotectant. This is L-ectoine synthase from Bordetella petrii (strain ATCC BAA-461 / DSM 12804 / CCUG 43448).